The primary structure comprises 104 residues: Phosphoribosyl-ATP pyrophosphatase (104 aa).

Belongs to the PRA-PH family.

The protein localises to the cytoplasm. The enzyme catalyses 1-(5-phospho-beta-D-ribosyl)-ATP + H2O = 1-(5-phospho-beta-D-ribosyl)-5'-AMP + diphosphate + H(+). Its pathway is amino-acid biosynthesis; L-histidine biosynthesis; L-histidine from 5-phospho-alpha-D-ribose 1-diphosphate: step 2/9. This Erythrobacter litoralis (strain HTCC2594) protein is Phosphoribosyl-ATP pyrophosphatase.